The chain runs to 547 residues: Glucose-6-phosphate isomerase (547 aa).

Glu351 functions as the Proton donor in the catalytic mechanism. Residues His382 and Lys509 contribute to the active site.

This sequence belongs to the GPI family.

It localises to the cytoplasm. The catalysed reaction is alpha-D-glucose 6-phosphate = beta-D-fructose 6-phosphate. Its pathway is carbohydrate biosynthesis; gluconeogenesis. It functions in the pathway carbohydrate degradation; glycolysis; D-glyceraldehyde 3-phosphate and glycerone phosphate from D-glucose: step 2/4. Its function is as follows. Catalyzes the reversible isomerization of glucose-6-phosphate to fructose-6-phosphate. This is Glucose-6-phosphate isomerase from Coxiella burnetii (strain Dugway 5J108-111).